Here is a 412-residue protein sequence, read N- to C-terminus: FAD-dependent monooxygenase nscC (412 aa).

A signal peptide spans 1–21 (MGKQQETILIIGAGISGLATS). E35 and A46 together coordinate FAD. N92 carries N-linked (GlcNAc...) asparagine glycosylation. An FAD-binding site is contributed by R119. N-linked (GlcNAc...) asparagine glycosylation is found at N170 and N231. FAD contacts are provided by D326 and G339.

The protein belongs to the paxM FAD-dependent monooxygenase family. FAD is required as a cofactor.

It functions in the pathway secondary metabolite biosynthesis. Its function is as follows. FAD-dependent monooxygenase; part of the gene cluster that mediates the biosynthesis of neosartoricin B, a prenylated anthracenone that probably exhibits T-cell antiproliferative activity, suggestive of a physiological role as an immunosuppressive agent. The non-reducing polyketide synthase nscA probably synthesizes and cyclizes the decaketide backbone. The hydrolase nscB then mediates the product release through hydrolysis followed by spontaneous decarboxylation. The prenyltransferase nscD catalyzes the addition of the dimethylallyl group to the aromatic C5. The FAD-dependent monooxygenase nscC is then responsible for the stereospecific hydroxylation at C2. Neosartoricin B can be converted into two additional compounds neosartoricins C and D. Neosartoricin C is a spirocyclic compound that is cyclized through the attack of C3 hydroxyl on C14, followed by dehydration. On the other hand, neosartoricin D is a further cyclized compound in which attack of C2 on C14 in neosartoricin C results in the formation of the acetal-containing dioxabicyclo-octanone ring. Both of these compounds are novel and possibly represent related metabolites of the gene cluster. This is FAD-dependent monooxygenase nscC from Trichophyton tonsurans (strain CBS 112818) (Scalp ringworm fungus).